Reading from the N-terminus, the 146-residue chain is Urease accessory protein UreE 1 (146 aa).

It belongs to the UreE family.

Its subcellular location is the cytoplasm. In terms of biological role, involved in urease metallocenter assembly. Binds nickel. Probably functions as a nickel donor during metallocenter assembly. The protein is Urease accessory protein UreE 1 of Pseudomonas syringae pv. tomato (strain ATCC BAA-871 / DC3000).